A 602-amino-acid polypeptide reads, in one-letter code: ATP-dependent lipid A-core flippase 1 (602 aa).

Helical transmembrane passes span 36 to 56, 80 to 100, 154 to 174, 176 to 196, and 261 to 281; these read LGFVAAIIGMLGYAAIDVYFL, LFIIVAFTVRGIAHFIANYCL, ILTIVQQSAFIIGLLGLMFYY, WQLSLIFLLITPIIAVIVSVV, and ASVPIIQVIASFALAFVFYAI. The 283-residue stretch at 39-321 folds into the ABC transmembrane type-1 domain; it reads VAAIIGMLGY…LTNVNSEFQQ (283 aa). One can recognise an ABC transporter domain in the interval 362 to 599; that stretch reads YKNTNTMTTS…QGAYAQLHSF (238 aa). ATP is bound at residue 398-405; sequence GRSGSGKS.

Belongs to the ABC transporter superfamily. Lipid exporter (TC 3.A.1.106) family. Homodimer.

The protein resides in the cell inner membrane. The enzyme catalyses ATP + H2O + lipid A-core oligosaccharideSide 1 = ADP + phosphate + lipid A-core oligosaccharideSide 2.. In terms of biological role, involved in lipopolysaccharide (LPS) biosynthesis. Translocates lipid A-core from the inner to the outer leaflet of the inner membrane. Transmembrane domains (TMD) form a pore in the inner membrane and the ATP-binding domain (NBD) is responsible for energy generation. In Colwellia psychrerythraea (strain 34H / ATCC BAA-681) (Vibrio psychroerythus), this protein is ATP-dependent lipid A-core flippase 1.